The primary structure comprises 116 residues: Protein BIC2 (116 aa).

2 disordered regions span residues 1–33 and 95–116; these read MKNT…TCFP and DSGD…ESSC.

Its subcellular location is the nucleus. Regulates the blue-light dependent dimerization of CRY2 and formation of photobodies. Inhibits CRY phosphorylation. This is Protein BIC2 from Arabidopsis thaliana (Mouse-ear cress).